We begin with the raw amino-acid sequence, 218 residues long: Eukaryotic translation initiation factor 3 subunit K (218 aa).

A2 carries the post-translational modification N-acetylalanine. T28 is subject to Phosphothreonine. The 163-residue stretch at 42-204 (YDLEANLAVL…SIKPKNIVEK (163 aa)) folds into the PCI domain. The residue at position 217 (S217) is a Phosphoserine.

This sequence belongs to the eIF-3 subunit K family. As to quaternary structure, component of the eukaryotic translation initiation factor 3 (eIF-3) complex, which is composed of 13 subunits: EIF3A, EIF3B, EIF3C, EIF3D, EIF3E, EIF3F, EIF3G, EIF3H, EIF3I, EIF3J, EIF3K, EIF3L and EIF3M. The eIF-3 complex appears to include 3 stable modules: module A is composed of EIF3A, EIF3B, EIF3G and EIF3I; module B is composed of EIF3F, EIF3H, and EIF3M; and module C is composed of EIF3C, EIF3D, EIF3E, EIF3K and EIF3L. EIF3C of module C binds EIF3B of module A and EIF3H of module B, thereby linking the three modules. EIF3J is a labile subunit that binds to the eIF-3 complex via EIF3B. The eIF-3 complex interacts with RPS6KB1 under conditions of nutrient depletion. Mitogenic stimulation leads to binding and activation of a complex composed of MTOR and RPTOR, leading to phosphorylation and release of RPS6KB1 and binding of EIF4B to eIF-3. Interacts with CCND3, but not with CCND1 and CCND2.

It localises to the nucleus. The protein resides in the cytoplasm. In terms of biological role, component of the eukaryotic translation initiation factor 3 (eIF-3) complex, which is required for several steps in the initiation of protein synthesis. The eIF-3 complex associates with the 40S ribosome and facilitates the recruitment of eIF-1, eIF-1A, eIF-2:GTP:methionyl-tRNAi and eIF-5 to form the 43S pre-initiation complex (43S PIC). The eIF-3 complex stimulates mRNA recruitment to the 43S PIC and scanning of the mRNA for AUG recognition. The eIF-3 complex is also required for disassembly and recycling of post-termination ribosomal complexes and subsequently prevents premature joining of the 40S and 60S ribosomal subunits prior to initiation. The eIF-3 complex specifically targets and initiates translation of a subset of mRNAs involved in cell proliferation, including cell cycling, differentiation and apoptosis, and uses different modes of RNA stem-loop binding to exert either translational activation or repression. The protein is Eukaryotic translation initiation factor 3 subunit K of Bos taurus (Bovine).